The following is a 402-amino-acid chain: Mannonate dehydratase 1 (402 aa).

This sequence belongs to the mannonate dehydratase family. Fe(2+) is required as a cofactor. Mn(2+) serves as cofactor.

It carries out the reaction D-mannonate = 2-dehydro-3-deoxy-D-gluconate + H2O. It participates in carbohydrate metabolism; pentose and glucuronate interconversion. Functionally, catalyzes the dehydration of D-mannonate. This chain is Mannonate dehydratase 1 (uxuA1), found in Agrobacterium fabrum (strain C58 / ATCC 33970) (Agrobacterium tumefaciens (strain C58)).